Consider the following 345-residue polypeptide: NADH-ubiquinone oxidoreductase chain 2 (345 aa).

Transmembrane regions (helical) follow at residues histidine 25–threonine 45, phenylalanine 60–leucine 80, threonine 99–leucine 119, leucine 149–asparagine 171, isoleucine 178–proline 198, glutamine 199–leucine 219, alanine 242–proline 262, leucine 282–leucine 302, and leucine 324–leucine 344.

It belongs to the complex I subunit 2 family. As to quaternary structure, core subunit of respiratory chain NADH dehydrogenase (Complex I) which is composed of 45 different subunits.

It is found in the mitochondrion inner membrane. It catalyses the reaction a ubiquinone + NADH + 5 H(+)(in) = a ubiquinol + NAD(+) + 4 H(+)(out). Functionally, core subunit of the mitochondrial membrane respiratory chain NADH dehydrogenase (Complex I) which catalyzes electron transfer from NADH through the respiratory chain, using ubiquinone as an electron acceptor. Essential for the catalytic activity and assembly of complex I. This is NADH-ubiquinone oxidoreductase chain 2 (mt-nd2) from Xenopus laevis (African clawed frog).